A 216-amino-acid polypeptide reads, in one-letter code: Probable GTP-binding protein EngB (216 aa).

Residues 43–216 enclose the EngB-type G domain; it reads DRIEVCFAGR…TLRSIIAHLD (174 aa). GTP-binding positions include 51–58, 78–82, 96–99, 163–166, and 197–199; these read GRSNVGKS, GRTQE, DLPG, TKAD, and TSS. Ser58 and Thr80 together coordinate Mg(2+).

This sequence belongs to the TRAFAC class TrmE-Era-EngA-EngB-Septin-like GTPase superfamily. EngB GTPase family. It depends on Mg(2+) as a cofactor.

In terms of biological role, necessary for normal cell division and for the maintenance of normal septation. This chain is Probable GTP-binding protein EngB, found in Ruegeria sp. (strain TM1040) (Silicibacter sp.).